The chain runs to 725 residues: Consortin (725 aa).

5 disordered regions span residues 1–72 (MDDS…LNNN), 103–124 (GKDKKIPGKRSPRSKKGTAKKI), 296–353 (LLVS…SLSV), 375–397 (TQSSETAGSPSGPDSSEDACEDD), and 485–510 (QQPDLTDSDGKSPQAQADSDGSENVL). Residues 1–664 (MDDSDTPTYY…LDQDEVGGGS (664 aa)) are Cytoplasmic-facing. A compositionally biased stretch (polar residues) spans 63-72 (VSEQDSLNNN). Over residues 109 to 121 (PGKRSPRSKKGTA) the composition is skewed to basic residues. Residues 300–314 (EDPKEGGATTKESES) show a composition bias toward basic and acidic residues. Composition is skewed to polar residues over residues 343 to 353 (DVQTDSPSLSV) and 375 to 388 (TQSSETAGSPSGPD). A helical transmembrane segment spans residues 665–685 (CILLVLLCIATVFLSVGGTAL). Residues 686-725 (YCTFGDMESPVCTDFADNMDFYYTKLLQGVAELKHWIYLS) are Extracellular-facing.

It belongs to the CNST family. In terms of assembly, interacts with connexins GJA1/CX43, GJB1/CX32, GJB2/CX26, GJB3/CX31, GJB6/CX30 and GJC1/CX45. Also interacts with GGA1 and GGA2. Does not interact with PANX1.

It is found in the cell membrane. The protein localises to the golgi apparatus. It localises to the trans-Golgi network membrane. Its subcellular location is the cytoplasmic vesicle. The protein resides in the secretory vesicle. Functionally, required for targeting of connexins to the plasma membrane. The protein is Consortin (CNST) of Homo sapiens (Human).